Reading from the N-terminus, the 156-residue chain is Small ribosomal subunit protein uS7 (156 aa).

It belongs to the universal ribosomal protein uS7 family. Part of the 30S ribosomal subunit. Contacts proteins S9 and S11.

Its function is as follows. One of the primary rRNA binding proteins, it binds directly to 16S rRNA where it nucleates assembly of the head domain of the 30S subunit. Is located at the subunit interface close to the decoding center, probably blocks exit of the E-site tRNA. The sequence is that of Small ribosomal subunit protein uS7 from Pseudarthrobacter chlorophenolicus (strain ATCC 700700 / DSM 12829 / CIP 107037 / JCM 12360 / KCTC 9906 / NCIMB 13794 / A6) (Arthrobacter chlorophenolicus).